The primary structure comprises 245 residues: 2-C-methyl-D-erythritol 4-phosphate cytidylyltransferase (245 aa).

The protein belongs to the IspD/TarI cytidylyltransferase family. IspD subfamily.

It carries out the reaction 2-C-methyl-D-erythritol 4-phosphate + CTP + H(+) = 4-CDP-2-C-methyl-D-erythritol + diphosphate. It participates in isoprenoid biosynthesis; isopentenyl diphosphate biosynthesis via DXP pathway; isopentenyl diphosphate from 1-deoxy-D-xylulose 5-phosphate: step 2/6. Its function is as follows. Catalyzes the formation of 4-diphosphocytidyl-2-C-methyl-D-erythritol from CTP and 2-C-methyl-D-erythritol 4-phosphate (MEP). The sequence is that of 2-C-methyl-D-erythritol 4-phosphate cytidylyltransferase from Chloroherpeton thalassium (strain ATCC 35110 / GB-78).